The following is a 93-amino-acid chain: Small ribosomal subunit protein uS19 (93 aa).

It belongs to the universal ribosomal protein uS19 family.

In terms of biological role, protein S19 forms a complex with S13 that binds strongly to the 16S ribosomal RNA. The protein is Small ribosomal subunit protein uS19 of Ehrlichia ruminantium (strain Welgevonden).